We begin with the raw amino-acid sequence, 537 residues long: MSKKVVILGSGPNRIGQGIEFDYACVHAVFSLQEEGYYAVMVNCNPETVSTDYDTADKLYFEPIVFEHVMDIIEREKPEGVILQFGGQTPLKLALPLQKNGVKILGTKPESIDKAEDRELFRELIIELGLKQPPSGTARTKEEALKIAKEIGFPVLVRPSYVLGGRAMRIVYDEEELKEYLEEAVSVSHERPVLIDKFLDNSIELDVDAVSDGKDVLIGAVMEHIEEAGVHSGDSATSIPPYSLSKEIVEEVKEQTRKLAVALEVKGLINVQYAVQNNEVYVLEVNPRASRTVPFVSKSIGYPLAKIATKVAIGKSLREILPEVFERLEKGEAHFASDFLPKEKKIFSVKEVVFPWKRFPEVDPILGPEMKSTGEVMGIDKEFGLAYYKAQLSAGYRLPEKGNLFISVADRDKPKILELAKEFEKLGFGIYATSGTYKFLKEHGVNAKRVLKVSEGRPNVVDMIINGEIHLVINTPSGKREKSDAYYIRRACVQFNVPYYTTMRAGYAVLEAIKSIKKLKEEGKGLSVHSLQEIYNI.

Positions 1 to 395 (MSKKVVILGS…AYYKAQLSAG (395 aa)) are carbamoyl phosphate synthetic domain. The region spanning 122–313 (RELIIELGLK…LAKIATKVAI (192 aa)) is the ATP-grasp domain. ATP contacts are provided by R158, K197, L199, E204, G229, V230, H231, S232, Q272, and E284. Residues Q272, E284, and N286 each coordinate Mg(2+). Residues Q272, E284, and N286 each contribute to the Mn(2+) site. The MGS-like domain maps to 396-537 (YRLPEKGNLF…VHSLQEIYNI (142 aa)). The tract at residues 396–537 (YRLPEKGNLF…VHSLQEIYNI (142 aa)) is allosteric domain.

Belongs to the CarB family. In terms of assembly, composed of two chains; the small (or glutamine) chain promotes the hydrolysis of glutamine to ammonia, which is used by the large (or ammonia) chain to synthesize carbamoyl phosphate. Tetramer of heterodimers (alpha,beta)4. It depends on Mg(2+) as a cofactor. The cofactor is Mn(2+).

The enzyme catalyses hydrogencarbonate + L-glutamine + 2 ATP + H2O = carbamoyl phosphate + L-glutamate + 2 ADP + phosphate + 2 H(+). It carries out the reaction hydrogencarbonate + NH4(+) + 2 ATP = carbamoyl phosphate + 2 ADP + phosphate + 2 H(+). The protein operates within amino-acid biosynthesis; L-arginine biosynthesis; carbamoyl phosphate from bicarbonate: step 1/1. Its pathway is pyrimidine metabolism; UMP biosynthesis via de novo pathway; (S)-dihydroorotate from bicarbonate: step 1/3. In terms of biological role, large subunit of the glutamine-dependent carbamoyl phosphate synthetase (CPSase). CPSase catalyzes the formation of carbamoyl phosphate from the ammonia moiety of glutamine, carbonate, and phosphate donated by ATP, constituting the first step of 2 biosynthetic pathways, one leading to arginine and/or urea and the other to pyrimidine nucleotides. The large subunit (synthetase) binds the substrates ammonia (free or transferred from glutamine from the small subunit), hydrogencarbonate and ATP and carries out an ATP-coupled ligase reaction, activating hydrogencarbonate by forming carboxy phosphate which reacts with ammonia to form carbamoyl phosphate. In Aquifex aeolicus (strain VF5), this protein is Carbamoyl phosphate synthase large chain, C-terminal section (carB2).